A 163-amino-acid polypeptide reads, in one-letter code: SsrA-binding protein (163 aa).

The segment covering arginine 140–leucine 157 has biased composition (basic and acidic residues). The disordered stretch occupies residues arginine 140 to arginine 163.

It belongs to the SmpB family.

The protein localises to the cytoplasm. In terms of biological role, required for rescue of stalled ribosomes mediated by trans-translation. Binds to transfer-messenger RNA (tmRNA), required for stable association of tmRNA with ribosomes. tmRNA and SmpB together mimic tRNA shape, replacing the anticodon stem-loop with SmpB. tmRNA is encoded by the ssrA gene; the 2 termini fold to resemble tRNA(Ala) and it encodes a 'tag peptide', a short internal open reading frame. During trans-translation Ala-aminoacylated tmRNA acts like a tRNA, entering the A-site of stalled ribosomes, displacing the stalled mRNA. The ribosome then switches to translate the ORF on the tmRNA; the nascent peptide is terminated with the 'tag peptide' encoded by the tmRNA and targeted for degradation. The ribosome is freed to recommence translation, which seems to be the essential function of trans-translation. The chain is SsrA-binding protein from Anaeromyxobacter dehalogenans (strain 2CP-C).